A 212-amino-acid polypeptide reads, in one-letter code: Redox-sensing transcriptional repressor Rex (212 aa).

The segment at residues 17–56 (KYHRYLQELMENDIDRISSKELSEKIGFTASQIRQDLNCF) is a DNA-binding region (H-T-H motif). NAD(+) is bound at residue 91-96 (GAGNIG).

The protein belongs to the transcriptional regulatory Rex family. Homodimer.

It localises to the cytoplasm. Functionally, modulates transcription in response to changes in cellular NADH/NAD(+) redox state. The sequence is that of Redox-sensing transcriptional repressor Rex from Clostridium perfringens (strain SM101 / Type A).